A 437-amino-acid chain; its full sequence is UDP-N-acetylmuramate--L-alanine ligase (437 aa).

Residue 108–114 (GAHGKTS) participates in ATP binding.

The protein belongs to the MurCDEF family.

Its subcellular location is the cytoplasm. The enzyme catalyses UDP-N-acetyl-alpha-D-muramate + L-alanine + ATP = UDP-N-acetyl-alpha-D-muramoyl-L-alanine + ADP + phosphate + H(+). The protein operates within cell wall biogenesis; peptidoglycan biosynthesis. Its function is as follows. Cell wall formation. The polypeptide is UDP-N-acetylmuramate--L-alanine ligase (Lysinibacillus sphaericus (strain C3-41)).